A 540-amino-acid polypeptide reads, in one-letter code: uncharacterized protein (540 aa).

ABC transporter domains follow at residues 2 to 252 (IAVN…KLSQ) and 320 to 537 (LRVE…LTEL). Residue 34–41 (GANGAGKS) coordinates ATP.

Belongs to the ABC transporter superfamily.

This is an uncharacterized protein from Bacillus subtilis (strain 168).